Here is a 50-residue protein sequence, read N- to C-terminus: Photosystem I reaction center subunit IX (50 aa).

Residues 7 to 27 (YLSTAPVLAILCCSFLAGLVI) traverse the membrane as a helical segment.

This sequence belongs to the PsaJ family.

It is found in the plastid. It localises to the chloroplast thylakoid membrane. In terms of biological role, may help in the organization of the PsaE and PsaF subunits. The polypeptide is Photosystem I reaction center subunit IX (Pinus koraiensis (Korean pine)).